The primary structure comprises 302 residues: MPCRLLHQRETRSGGPRGPRHSAPTGPGWHNAPTLQSWEESHAPSRDPRDHQGSVEDTSLGGDAPADGVSPSVPPLQGLGKAAGPGGTGQAECQVVVATHRANLKPWDGRAAPLGKRTEEGRLSTSSCASVSRNKPDSVPQGDPVWPPESTGPALCAGEETEPQSSEGLAWGPWAQPWAPSLCPSQTGTASTASPQRASRLALQGPPGTILSLSSSSPCLPPSHCDPGAASSWAGLQSLKLLLQVSFQGAADGCSLRDANTNRKGPMHGSDFPPRLCLHSMSLWGSWGSRPPSPAHSREVAS.

2 disordered regions span residues 1–167 and 180–199; these read MPCR…QSSE and PSLCPSQTGTASTASPQRAS. The segment covering 39-54 has biased composition (basic and acidic residues); that stretch reads EESHAPSRDPRDHQGS. 2 stretches are compositionally biased toward polar residues: residues 123-133 and 183-197; these read LSTSSCASVSR and CPSQTGTASTASPQR.

This is an uncharacterized protein from Homo sapiens (Human).